The sequence spans 337 residues: Cysteinyl leukotriene receptor 1 (337 aa).

Residues 1-28 (MDETGNLTVSSATCHDTIDDFRNQVYST) lie on the Extracellular side of the membrane. N-linked (GlcNAc...) asparagine glycosylation is present at Asn-6. A helical membrane pass occupies residues 29–49 (LYSMISVVGFFGNGFVLYVLI). The Cytoplasmic portion of the chain corresponds to 50–57 (KTYHKKSA). Residues 58–78 (FQVYMINLAVADLLCVCTLPL) form a helical membrane-spanning segment. Over 79 to 106 (RVVYYVHKGIWLFGDFLCRLSTYALYVN) the chain is Extracellular. Residues Cys-96 and Cys-173 are joined by a disulfide bond. A helical transmembrane segment spans residues 107 to 127 (LYCSIFFMTAMSFFRCIAIVF). At 128 to 141 (PVQNINLVTQKKAR) the chain is on the cytoplasmic side. A helical transmembrane segment spans residues 142–162 (FVCVGIWIFVILTSSPFLMAK). Over 163–193 (PQKDEKNNTKCFEPPQDNQTKNHVLVLHYVS) the chain is Extracellular. N-linked (GlcNAc...) asparagine glycosylation is found at Asn-169 and Asn-180. The chain crosses the membrane as a helical span at residues 194 to 214 (LFVGFIIPFVIIIVCYTMIIL). Residues 215–230 (TLLKKSMKKNLSSHKK) lie on the Cytoplasmic side of the membrane. The helical transmembrane segment at 231 to 251 (AIGMIMVVTAAFLVSFMPYHI) threads the bilayer. Residues 252–276 (QRTIHLHFLHNETKPCDSVLRMQKS) lie on the Extracellular side of the membrane. A glycan (N-linked (GlcNAc...) asparagine) is linked at Asn-262. A helical membrane pass occupies residues 277-297 (VVITLSLAASNCCFDPLLYFF). Residues 298–337 (SGGNFRKRLSTFRKHSLSSVTYVPRKKASLPEKGEEICKV) are Cytoplasmic-facing.

This sequence belongs to the G-protein coupled receptor 1 family. In terms of tissue distribution, widely expressed, with highest levels in spleen and peripheral blood leukocytes. Lower expression in several tissues, such as lung (mostly in smooth muscle bundles and alveolar macrophages), placenta, small intestine, pancreas, colon and heart.

Its subcellular location is the cell membrane. Functionally, receptor for cysteinyl leukotrienes mediating bronchoconstriction of individuals with and without asthma. Stimulation by LTD4 results in the contraction and proliferation of smooth muscle, edema, eosinophil migration and damage to the mucus layer in the lung. This response is mediated via a G-protein that activates a phosphatidylinositol-calcium second messenger system. The rank order of affinities for the leukotrienes is LTD4 &gt;&gt; LTE4 = LTC4 &gt;&gt; LTB4. The protein is Cysteinyl leukotriene receptor 1 (CYSLTR1) of Homo sapiens (Human).